The chain runs to 549 residues: Oxygen-dependent choline dehydrogenase (549 aa).

Residue 4-33 coordinates FAD; the sequence is DFVIIGSGSAGSALAYRLSEDGANSVVVLE. Histidine 465 serves as the catalytic Proton acceptor.

This sequence belongs to the GMC oxidoreductase family. FAD serves as cofactor.

It catalyses the reaction choline + A = betaine aldehyde + AH2. The enzyme catalyses betaine aldehyde + NAD(+) + H2O = glycine betaine + NADH + 2 H(+). Its pathway is amine and polyamine biosynthesis; betaine biosynthesis via choline pathway; betaine aldehyde from choline (cytochrome c reductase route): step 1/1. Functionally, involved in the biosynthesis of the osmoprotectant glycine betaine. Catalyzes the oxidation of choline to betaine aldehyde and betaine aldehyde to glycine betaine at the same rate. The sequence is that of Oxygen-dependent choline dehydrogenase from Sinorhizobium medicae (strain WSM419) (Ensifer medicae).